Consider the following 666-residue polypeptide: Threonine--tRNA ligase (666 aa).

The TGS domain maps to 1-64 (MSDTVSLTFP…VDGKIEIVTR (64 aa)). Residues 245 to 553 (DHRKLGREMD…LIENFAGHMP (309 aa)) are catalytic. Residues cysteine 347, histidine 398, and histidine 530 each coordinate Zn(2+).

It belongs to the class-II aminoacyl-tRNA synthetase family. Homodimer. Zn(2+) is required as a cofactor.

The protein resides in the cytoplasm. It carries out the reaction tRNA(Thr) + L-threonine + ATP = L-threonyl-tRNA(Thr) + AMP + diphosphate + H(+). In terms of biological role, catalyzes the attachment of threonine to tRNA(Thr) in a two-step reaction: L-threonine is first activated by ATP to form Thr-AMP and then transferred to the acceptor end of tRNA(Thr). Also edits incorrectly charged L-seryl-tRNA(Thr). This Allorhizobium ampelinum (strain ATCC BAA-846 / DSM 112012 / S4) (Agrobacterium vitis (strain S4)) protein is Threonine--tRNA ligase.